The primary structure comprises 408 residues: Bone morphogenetic protein 4 (408 aa).

Residues 1-19 (MIPGNRMLMVVLLCQVLLG) form the signal peptide. A propeptide spanning residues 20–292 (GASHASLIPE…HTLTRRRAKR (273 aa)) is cleaved from the precursor. S91 bears the Phosphoserine mark. The interval 91–111 (SGEEEEEEQSQGTGLEYPERP) is disordered. Residues N144 and N209 are each glycosylated (N-linked (GlcNAc...) asparagine). The tract at residues 281 to 307 (RGHTLTRRRAKRSPKHHPQRSRKKNKN) is disordered. Residues 284–307 (TLTRRRAKRSPKHHPQRSRKKNKN) are compositionally biased toward basic residues. Cystine bridges form between C308–C373, C337–C405, and C341–C407. N-linked (GlcNAc...) asparagine glycans are attached at residues N350 and N365.

It belongs to the TGF-beta family. As to quaternary structure, homodimer; disulfide-linked. Interacts with SOSTDC1, GREM2, RGMA, RGMB and RGMC. Part of a complex consisting of TWSG1 and CHRD. Interacts with the serine proteases, HTRA1 and HTRA3; the interaction with either inhibits BMP4-mediated signaling. The HTRA protease activity is required for this inhibition. Interacts with FBN1 (via N-terminal domain) and FBN2. Interacts with type I receptor BMPR1A. Interacts with type II receptor BMPR2. Interacts with FSTL1; this interaction inhibits the activation of the BMP4/Smad1/5/8 signaling pathway. Interacts with SCUBE3. Interacts with TGFBR3. In terms of tissue distribution, in the cochlea, detected in nonprosensory regions and outer sulcus (at protein level). Prior to gastrulation, expressed in the extraembryonic ectoderm. Later, expressed in the extraembryonic mesoderm.

It localises to the secreted. The protein resides in the extracellular space. Its subcellular location is the extracellular matrix. Functionally, growth factor of the TGF-beta superfamily that plays essential roles in many developmental processes, including neurogenesis, vascular development, angiogenesis and osteogenesis. Acts in concert with PTHLH/PTHRP to stimulate ductal outgrowth during embryonic mammary development and to inhibit hair follicle induction. Initiates the canonical BMP signaling cascade by associating with type I receptor BMPR1A and type II receptor BMPR2. Once all three components are bound together in a complex at the cell surface, BMPR2 phosphorylates and activates BMPR1A. In turn, BMPR1A propagates signal by phosphorylating SMAD1/5/8 that travel to the nucleus and act as activators and repressors of transcription of target genes. Positively regulates the expression of odontogenic development regulator MSX1 via inducing the IPO7-mediated import of SMAD1 to the nucleus. Required for MSX1-mediated mesenchymal molar tooth bud development beyond the bud stage, via promoting Wnt signaling. Acts as a positive regulator of odontoblast differentiation during mesenchymal tooth germ formation, expression is repressed during the bell stage by MSX1-mediated inhibition of CTNNB1 signaling. Able to induce its own expression in dental mesenchymal cells and also in the neighboring dental epithelial cells via an MSX1-mediated pathway. Can also signal through non-canonical BMP pathways such as ERK/MAP kinase, PI3K/Akt or SRC cascades. For example, induces SRC phosphorylation which, in turn, activates VEGFR2, leading to an angiogenic response. The protein is Bone morphogenetic protein 4 of Mus musculus (Mouse).